The following is a 219-amino-acid chain: uncharacterized protein (219 aa).

The N-terminal stretch at 1-17 (MFKKIIILFLGIFLLSS) is a signal peptide. A lipid anchor (N-palmitoyl cysteine) is attached at Cys-18. Cys-18 is lipidated: S-diacylglycerol cysteine. The tract at residues 110–136 (KAESNATQSNNDMTLSKANKKVRKDDS) is disordered. Residues 112-126 (ESNATQSNNDMTLSK) are compositionally biased toward polar residues. The stretch at 137–165 (YKEKKIEEELNQIKAMLRETKRDITKYTC) forms a coiled coil.

Its subcellular location is the cell membrane. This is an uncharacterized protein from Rickettsia prowazekii (strain Madrid E).